The following is a 349-amino-acid chain: Phospho-N-acetylmuramoyl-pentapeptide-transferase (349 aa).

10 helical membrane passes run 13-33 (LFFS…SLGV), 69-89 (GGGV…LPWG), 91-111 (FSTW…WYDD), 129-149 (FMVQ…IYGS), 165-185 (LSLP…VAII), 197-217 (LDGL…FVAL), 228-248 (VAYV…YNGF), 252-272 (LFMG…CAVM), 278-298 (ILVV…LQVL), and 327-347 (IVMR…AAVL).

The protein belongs to the glycosyltransferase 4 family. MraY subfamily. Mg(2+) is required as a cofactor.

The protein localises to the cell inner membrane. It carries out the reaction UDP-N-acetyl-alpha-D-muramoyl-L-alanyl-gamma-D-glutamyl-meso-2,6-diaminopimeloyl-D-alanyl-D-alanine + di-trans,octa-cis-undecaprenyl phosphate = di-trans,octa-cis-undecaprenyl diphospho-N-acetyl-alpha-D-muramoyl-L-alanyl-D-glutamyl-meso-2,6-diaminopimeloyl-D-alanyl-D-alanine + UMP. It participates in cell wall biogenesis; peptidoglycan biosynthesis. Its function is as follows. Catalyzes the initial step of the lipid cycle reactions in the biosynthesis of the cell wall peptidoglycan: transfers peptidoglycan precursor phospho-MurNAc-pentapeptide from UDP-MurNAc-pentapeptide onto the lipid carrier undecaprenyl phosphate, yielding undecaprenyl-pyrophosphoryl-MurNAc-pentapeptide, known as lipid I. In Chlamydia pneumoniae (Chlamydophila pneumoniae), this protein is Phospho-N-acetylmuramoyl-pentapeptide-transferase.